The following is a 329-amino-acid chain: Dapdiamide synthesis protein DdaC (329 aa).

Requires Fe(2+) as cofactor.

Its pathway is antibiotic biosynthesis. Its function is as follows. Involved in dapdiamide antibiotics biosynthesis. Catalyzes the alpha-ketoglutarate-dependent epoxidation of the covalently bound N-beta-fumaramoyl-DAP-S-DdaD to generate N-beta-epoxysuccinamoyl-DAP in thioester linkage to DdaD. The chain is Dapdiamide synthesis protein DdaC from Enterobacter agglomerans (Erwinia herbicola).